Here is a 761-residue protein sequence, read N- to C-terminus: Phosphoribosylformylglycinamidine synthase subunit PurL (761 aa).

Residue His58 is part of the active site. Tyr61 and Lys105 together coordinate ATP. Position 107 (Glu107) interacts with Mg(2+). Substrate contacts are provided by residues 108–111 (SHNH) and Arg130. The Proton acceptor role is filled by His109. Asp131 contacts Mg(2+). Gln259 is a substrate binding site. Asp287 serves as a coordination point for Mg(2+). 331–333 (ESQ) provides a ligand contact to substrate. Residues Asn519 and Gly556 each coordinate ATP. Mg(2+) is bound at residue Asn557. Ser559 is a binding site for substrate.

It belongs to the FGAMS family. Monomer. Part of the FGAM synthase complex composed of 1 PurL, 1 PurQ and 2 PurS subunits.

Its subcellular location is the cytoplasm. The catalysed reaction is N(2)-formyl-N(1)-(5-phospho-beta-D-ribosyl)glycinamide + L-glutamine + ATP + H2O = 2-formamido-N(1)-(5-O-phospho-beta-D-ribosyl)acetamidine + L-glutamate + ADP + phosphate + H(+). It functions in the pathway purine metabolism; IMP biosynthesis via de novo pathway; 5-amino-1-(5-phospho-D-ribosyl)imidazole from N(2)-formyl-N(1)-(5-phospho-D-ribosyl)glycinamide: step 1/2. Part of the phosphoribosylformylglycinamidine synthase complex involved in the purines biosynthetic pathway. Catalyzes the ATP-dependent conversion of formylglycinamide ribonucleotide (FGAR) and glutamine to yield formylglycinamidine ribonucleotide (FGAM) and glutamate. The FGAM synthase complex is composed of three subunits. PurQ produces an ammonia molecule by converting glutamine to glutamate. PurL transfers the ammonia molecule to FGAR to form FGAM in an ATP-dependent manner. PurS interacts with PurQ and PurL and is thought to assist in the transfer of the ammonia molecule from PurQ to PurL. In Rhodococcus jostii (strain RHA1), this protein is Phosphoribosylformylglycinamidine synthase subunit PurL.